Reading from the N-terminus, the 781-residue chain is Aconitate hydratase, mitochondrial (781 aa).

The transit peptide at 1-27 (MAPYSLLVTRLQKALGVRQYHVASVLC) directs the protein to the mitochondrion. Gln-28 carries the pyrrolidone carboxylic acid modification. Lys-31 bears the N6-succinyllysine mark. Lys-50 is subject to N6-acetyllysine; alternate. An N6-succinyllysine; alternate modification is found at Lys-50. Gln-99 contributes to the substrate binding site. Lys-138 and Lys-144 each carry N6-acetyllysine; alternate. Residues Lys-138 and Lys-144 each carry the N6-succinyllysine; alternate modification. 192-194 (DSH) serves as a coordination point for substrate. Lys-233 is subject to N6-acetyllysine; alternate. An N6-succinyllysine; alternate modification is found at Lys-233. Cys-385 provides a ligand contact to [4Fe-4S] cluster. Lys-411 is modified (N6-succinyllysine). Positions 448 and 451 each coordinate [4Fe-4S] cluster. Arg-474 and Arg-479 together coordinate substrate. N6-acetyllysine; alternate occurs at positions 517 and 523. 2 positions are modified to N6-succinyllysine; alternate: Lys-517 and Lys-523. The span at 524 to 537 (LEAPDADELPRAEF) shows a compositional bias: basic and acidic residues. The segment at 524–561 (LEAPDADELPRAEFDPGQDTYQHPPKDSSGQRVDVSPT) is disordered. N6-succinyllysine is present on Lys-549. The segment covering 551 to 561 (SSGQRVDVSPT) has biased composition (polar residues). Ser-559 carries the phosphoserine modification. Lys-573 is modified (N6-acetyllysine; alternate). N6-succinyllysine; alternate is present on Lys-573. Residues Lys-577 and Lys-591 each carry the N6-succinyllysine modification. N6-acetyllysine; alternate is present on Lys-605. Lys-605 bears the N6-succinyllysine; alternate mark. Arg-607 is a binding site for substrate. The residue at position 628 (Lys-628) is an N6-succinyllysine. A Phosphoserine modification is found at Ser-670. 670–671 (SR) is a substrate binding site. Position 689 is an N6-succinyllysine (Lys-689). N6-acetyllysine; alternate is present on residues Lys-723 and Lys-730. N6-succinyllysine; alternate occurs at positions 723 and 730. Residues Lys-736, Lys-739, and Lys-743 each carry the N6-acetyllysine modification.

It belongs to the aconitase/IPM isomerase family. Monomer. [4Fe-4S] cluster is required as a cofactor. Forms covalent cross-links mediated by transglutaminase TGM2, between a glutamine and the epsilon-amino group of a lysine residue, forming homopolymers and heteropolymers.

The protein localises to the mitochondrion. It catalyses the reaction citrate = D-threo-isocitrate. Its pathway is carbohydrate metabolism; tricarboxylic acid cycle; isocitrate from oxaloacetate: step 2/2. Catalyzes the isomerization of citrate to isocitrate via cis-aconitate. This Sus scrofa (Pig) protein is Aconitate hydratase, mitochondrial (ACO2).